A 171-amino-acid chain; its full sequence is Small ribosomal subunit protein uS5 (171 aa).

The region spanning 15 to 78 is the S5 DRBM domain; the sequence is LEEKVVKINR…EKAKKQLVRI (64 aa).

Belongs to the universal ribosomal protein uS5 family. In terms of assembly, part of the 30S ribosomal subunit. Contacts proteins S4 and S8.

In terms of biological role, with S4 and S12 plays an important role in translational accuracy. Functionally, located at the back of the 30S subunit body where it stabilizes the conformation of the head with respect to the body. The sequence is that of Small ribosomal subunit protein uS5 from Onion yellows phytoplasma (strain OY-M).